We begin with the raw amino-acid sequence, 171 residues long: Ribosome maturation factor RimM (171 aa).

In terms of domain architecture, PRC barrel spans Asp-97 to Leu-169.

This sequence belongs to the RimM family. In terms of assembly, binds ribosomal protein uS19.

Its subcellular location is the cytoplasm. Functionally, an accessory protein needed during the final step in the assembly of 30S ribosomal subunit, possibly for assembly of the head region. Essential for efficient processing of 16S rRNA. May be needed both before and after RbfA during the maturation of 16S rRNA. It has affinity for free ribosomal 30S subunits but not for 70S ribosomes. This is Ribosome maturation factor RimM from Lactococcus lactis subsp. lactis (strain IL1403) (Streptococcus lactis).